The sequence spans 952 residues: Protein translocase subunit SecA (952 aa).

Residues Gln135, Gly153–Thr157, and Asp575 contribute to the ATP site. Over residues Ala907 to Ala921 the composition is skewed to low complexity. The segment at Ala907 to Tyr946 is disordered. Zn(2+) contacts are provided by Cys938, Cys940, Cys949, and Cys950.

The protein belongs to the SecA family. In terms of assembly, monomer and homodimer. Part of the essential Sec protein translocation apparatus which comprises SecA, SecYEG and auxiliary proteins SecDF. Other proteins may also be involved. Zn(2+) serves as cofactor.

The protein localises to the cell membrane. It localises to the cytoplasm. The catalysed reaction is ATP + H2O + cellular proteinSide 1 = ADP + phosphate + cellular proteinSide 2.. Part of the Sec protein translocase complex. Interacts with the SecYEG preprotein conducting channel. Has a central role in coupling the hydrolysis of ATP to the transfer of proteins into and across the cell membrane, serving as an ATP-driven molecular motor driving the stepwise translocation of polypeptide chains across the membrane. This Dehalococcoides mccartyi (strain CBDB1) protein is Protein translocase subunit SecA.